We begin with the raw amino-acid sequence, 194 residues long: uncharacterized protein (194 aa).

It to A.rhizogenes plasmid pRia4B ORF-3 in virA region.

This is an uncharacterized protein from Sinorhizobium fredii (strain NBRC 101917 / NGR234).